Reading from the N-terminus, the 328-residue chain is Arabinose 5-phosphate isomerase KdsD (328 aa).

The SIS domain occupies 41-184; sequence ACEAIFRCHG…AVALLKARGF (144 aa). Substrate contacts are provided by residues 75–76, H82, H88, 114–123, and 148–150; these read GT, TLIPVLKRQK, and NVP. Residue H82 participates in Zn(2+) binding. The 59-residue stretch at 210-268 folds into the CBS 1 domain; the sequence is MHTGTEIPTVSPDASLRDALLEITRKSLGLTVICDDSMRIKGIFTDGDLRRVFDMGIDL. D275 provides a ligand contact to substrate. A CBS 2 domain is found at 277 to 328; it reads MTRGGIRVPPNILAVDALNLMESRHITALLVADGDQLLGVVHMHDMLRAGVV.

The protein belongs to the SIS family. GutQ/KpsF subfamily. In terms of assembly, homotetramer.

The enzyme catalyses D-arabinose 5-phosphate = D-ribulose 5-phosphate. The protein operates within carbohydrate biosynthesis; 3-deoxy-D-manno-octulosonate biosynthesis; 3-deoxy-D-manno-octulosonate from D-ribulose 5-phosphate: step 1/3. It participates in bacterial outer membrane biogenesis; lipopolysaccharide biosynthesis. Involved in the biosynthesis of 3-deoxy-D-manno-octulosonate (KDO), a unique 8-carbon sugar component of lipopolysaccharides (LPSs). Catalyzes the reversible aldol-ketol isomerization between D-ribulose 5-phosphate (Ru5P) and D-arabinose 5-phosphate (A5P). The chain is Arabinose 5-phosphate isomerase KdsD (kdsD) from Yersinia pestis.